A 298-amino-acid polypeptide reads, in one-letter code: Probable alpha-L-glutamate ligase (298 aa).

An ATP-grasp domain is found at 108–290 (LQLLLKTGVP…IAAEIIDYIE (183 aa)). Residues Lys-144, 181–182 (DF), Asp-190, and 214–216 (RAN) contribute to the ATP site. Positions 251, 263, and 265 each coordinate Mg(2+). Residues Asp-251, Glu-263, and Asn-265 each coordinate Mn(2+).

The protein belongs to the RimK family. Mg(2+) is required as a cofactor. The cofactor is Mn(2+).

The chain is Probable alpha-L-glutamate ligase from Haemophilus influenzae (strain PittEE).